Consider the following 1053-residue polypeptide: Protein CLEC16A (1053 aa).

Residues 51 to 198 (IRSITEILIW…AVRTITLNVY (148 aa)) form the FPL domain. 3 disordered regions span residues 375–434 (SLEM…GESE), 452–471 (STSVQEQNTTDEEKSAAATC), and 892–983 (SSPS…SPSL). The span at 381–392 (HKGKRRVQKRPN) shows a compositional bias: basic residues. Over residues 892–938 (SSPSLSSQSPPSASGSPSGSGSTSHCDSGGTSSSSTPSTAQSPADAP) the composition is skewed to low complexity.

The protein belongs to the CLEC16A/gop-1 family. As to quaternary structure, interacts with RNF41/NRDP1. Almost exclusively expressed in immune cells, including dendritic cells, B-lymphocytes and natural killer cells.

It localises to the endosome membrane. The protein resides in the lysosome membrane. Functionally, regulator of mitophagy through the upstream regulation of the RNF41/NRDP1-PRKN pathway. Mitophagy is a selective form of autophagy necessary for mitochondrial quality control. The RNF41/NRDP1-PRKN pathway regulates autophagosome-lysosome fusion during late mitophagy. May protect RNF41/NRDP1 from proteasomal degradation, RNF41/NRDP1 which regulates proteasomal degradation of PRKN. Plays a key role in beta cells functions by regulating mitophagy/autophagy and mitochondrial health. The polypeptide is Protein CLEC16A (Homo sapiens (Human)).